Here is a 92-residue protein sequence, read N- to C-terminus: Small ribosomal subunit protein uS19 (92 aa).

It belongs to the universal ribosomal protein uS19 family.

In terms of biological role, protein S19 forms a complex with S13 that binds strongly to the 16S ribosomal RNA. The chain is Small ribosomal subunit protein uS19 from Prochlorococcus marinus (strain MIT 9301).